Reading from the N-terminus, the 365-residue chain is Myocyte-specific enhancer factor 2B (365 aa).

The MADS-box domain occupies 3–57 (RKKIQISRILDQRNRQVTFTKRKFGLMKKAYELSVLCDCEIALIIFNSANRLFQY). Positions 58–86 (ASTDMDRVLLKYTEYSEPHESRTNTDILE) form a DNA-binding region, mef2-type. Disordered regions lie at residues 94–124 (GLDG…GDPA), 142–309 (VVYG…SPGP), and 321–365 (AGCP…KTQQ). The segment covering 98–108 (PELEPDEGPEE) has biased composition (acidic residues). Residues 223-240 (NTSRSLYSGLQNPCSTAT) show a composition bias toward polar residues. Composition is skewed to low complexity over residues 277 to 289 (PQSA…SLRP) and 326 to 346 (PTAG…SPGT). Residues 354 to 365 (TSLQASSEKTQQ) are compositionally biased toward polar residues.

This sequence belongs to the MEF2 family. Interacts with HDAC7. Heterodimer. Interacts with HDAC9. In terms of tissue distribution, expressed in skeletal and cardiac muscle and brain.

The protein localises to the nucleus. Functionally, transcriptional activator which binds specifically to the MEF2 element, 5'-YTA[AT](4)TAR-3', found in numerous muscle-specific genes. Activates transcription via this element. May be involved in muscle-specific and/or growth factor-related transcription. The chain is Myocyte-specific enhancer factor 2B (MEF2B) from Homo sapiens (Human).